The sequence spans 400 residues: MAANYSSTSSRKEHVKVTSEPQPGFLERLSETSGGMFVGLMTFLLSFYLIFTNEGRALKTATSLAEGLSLVVSPDSIHSVAPENEGRLVHIIGALRTSKLLSDPNYGVHLPAVKLRRHVEMYQWVETEESSEYTEDGQVKKETKYSYNTEWRSEIVNSRNFDREIGHKNPSAMAVESFTATAPFVQIGRFFLSAGLIDKIDNFKALSLAKLEDPHVDIIRRGDFFYHSENPKYPEVGDVRVSFSYAGLSSDDPDLGPAHVVTVIARQRGDQLIPYSTKSGDTLLLLHHGDFSAEEVFRREQKSNSMKTWGLRAAGWMAMFMGLNLMTRILYTLVDWFPVFRDLVNIGLKAFAFCVATSLTLLTVAAGWLFYRPLWAALIGCLALVPIIIARTRVPAKKLE.

Position 2 is an N-acetylalanine (Ala2). Residues 2-31 (AANYSSTSSRKEHVKVTSEPQPGFLERLSE) lie on the Nuclear side of the membrane. Residues 32–52 (TSGGMFVGLMTFLLSFYLIFT) form a helical membrane-spanning segment. The Perinuclear space portion of the chain corresponds to 53–313 (NEGRALKTAT…NSMKTWGLRA (261 aa)). Residues 314 to 334 (AGWMAMFMGLNLMTRILYTLV) form a helical membrane-spanning segment. Residues 335-345 (DWFPVFRDLVN) lie on the Nuclear side of the membrane. Residues 346-366 (IGLKAFAFCVATSLTLLTVAA) traverse the membrane as a helical segment. Residues 367–368 (GW) are Perinuclear space-facing. Residues 369 to 389 (LFYRPLWAALIGCLALVPIII) traverse the membrane as a helical segment. The Nuclear segment spans residues 390 to 400 (ARTRVPAKKLE).

This sequence belongs to the TMEM43 family. Can form oligomers through the transmembrane domains. Interacts with EMD; the interaction retains EMD at the inner nuclear membrane. Interacts with LMNA and LMNB2. Interacts with SUN2. Interacts with RNF26; this interaction is important to modulate innate immune signaling through the cGAS-STING pathway. Interacts with CARD10. Interacts with gap junctions proteins GJB2/Cx26 and GJB4/Cx30. In terms of tissue distribution, widely expressed, including in the cochlea, heart, eye, brain and kidney.

It is found in the endoplasmic reticulum membrane. Its subcellular location is the nucleus inner membrane. It localises to the cell membrane. Its function is as follows. May have an important role in maintaining nuclear envelope structure by organizing protein complexes at the inner nuclear membrane. Required for retaining emerin at the inner nuclear membrane. Plays a role in the modulation of innate immune signaling through the cGAS-STING pathway by interacting with RNF26. In addition, functions as a critical signaling component in mediating NF-kappa-B activation by acting downstream of EGFR and upstream of CARD10. Contributes to passive conductance current in cochlear glia-like supporting cells, mediated by gap junctions and necessary for hearing. The protein is Transmembrane protein 43 (Tmem43) of Mus musculus (Mouse).